We begin with the raw amino-acid sequence, 216 residues long: Chloramphenicol acetyltransferase (216 aa).

The active-site Proton acceptor is the His-189.

The protein belongs to the chloramphenicol acetyltransferase family. In terms of assembly, homotrimer.

It catalyses the reaction chloramphenicol + acetyl-CoA = chloramphenicol 3-acetate + CoA. Its function is as follows. This enzyme is an effector of chloramphenicol resistance in bacteria. This is Chloramphenicol acetyltransferase (cat) from Staphylococcus aureus.